A 224-amino-acid polypeptide reads, in one-letter code: MECRDMELADDYQSPFDFDSGVNKNYLYLSPSGNTSPPGSPTQNVGLLKTEPVAEEGEDAVTMLSAPEALTEEEQEELRRELTKVEEEIQTLSQVLAAKEKHLAELKRKLGISSLQEFKQNIAKGWQDVTATNAYKKTSETLSQAGQKASAAFSSVGSVITKKLEDVKNSPTFKSFEEKVENLKSKVGGAKPAGGDFGEVLNSTANATSTMTTEPPPEQMTESP.

Residues leucine 29–valine 53 form a disordered region. Threonine 35 is subject to Phosphothreonine. Phosphoserine is present on residues serine 36 and serine 40. Positions valine 61–serine 113 form a coiled coil. Threonine 138, serine 175, and serine 223 each carry phosphoserine. The disordered stretch occupies residues lysine 186–proline 224. Residues asparagine 202–proline 224 are compositionally biased toward low complexity.

It belongs to the TPD52 family. As to quaternary structure, forms a homodimer or heterodimer with other members of the family. In terms of tissue distribution, isoform 2 is expressed at higher levels in kidney and brain than in liver, lung, testis and heart. Within the brain, isoform 2 is highly expressed in the granular layer of the cerebellum, the cortex and the hippocampus. In embryos, isoform 2 is expressed in the epithelium of the developing intestine, stomach, olfactory epithelium, neuronal layers of the retina, salivary gland, kidney and dorsal root ganglion.

This chain is Tumor protein D52 (Tpd52), found in Mus musculus (Mouse).